The chain runs to 796 residues: Protein translocase subunit SecA 2 (796 aa).

Residues glutamine 84, 102–106, and aspartate 496 contribute to the ATP site; that span reads GEGKT.

The protein belongs to the SecA family. In terms of assembly, monomer and homodimer. Part of the essential Sec protein translocation apparatus which comprises SecA, SecYEG and auxiliary proteins SecDF. Other proteins may also be involved.

The protein localises to the cell membrane. It localises to the cytoplasm. It catalyses the reaction ATP + H2O + cellular proteinSide 1 = ADP + phosphate + cellular proteinSide 2.. Part of the Sec protein translocase complex. Interacts with the SecYEG preprotein conducting channel. Has a central role in coupling the hydrolysis of ATP to the transfer of proteins into and across the cell membrane, serving as an ATP-driven molecular motor driving the stepwise translocation of polypeptide chains across the membrane. The polypeptide is Protein translocase subunit SecA 2 (Staphylococcus epidermidis (strain ATCC 35984 / DSM 28319 / BCRC 17069 / CCUG 31568 / BM 3577 / RP62A)).